The sequence spans 216 residues: Probable GTP-binding protein EngB (216 aa).

The 174-residue stretch at 43-216 (DRLEVCFAGR…TLRSIITDLT (174 aa)) folds into the EngB-type G domain. Residues 51 to 58 (GRSNVGKS), 78 to 82 (GRTQE), 96 to 99 (DLPG), 163 to 166 (TKAD), and 197 to 199 (TSS) contribute to the GTP site. Residues S58 and T80 each coordinate Mg(2+).

This sequence belongs to the TRAFAC class TrmE-Era-EngA-EngB-Septin-like GTPase superfamily. EngB GTPase family. It depends on Mg(2+) as a cofactor.

In terms of biological role, necessary for normal cell division and for the maintenance of normal septation. The polypeptide is Probable GTP-binding protein EngB (Roseobacter denitrificans (strain ATCC 33942 / OCh 114) (Erythrobacter sp. (strain OCh 114))).